The primary structure comprises 278 residues: Non-heme chloroperoxidase (278 aa).

The region spanning 26–264 is the AB hydrolase-1 domain; sequence PVVLIHGFPL…GAPHGLLWTH (239 aa). Residues Ser99, Asp229, and His258 contribute to the active site.

The protein belongs to the AB hydrolase superfamily. Bacterial non-heme haloperoxidase / perhydrolase family. In terms of assembly, homodimer.

This chain is Non-heme chloroperoxidase (cpo), found in Kitasatospora aureofaciens (Streptomyces aureofaciens).